Reading from the N-terminus, the 483-residue chain is Protein nucleotidyltransferase YdiU (483 aa).

The ATP site is built by glycine 87, glycine 89, arginine 90, lysine 110, aspartate 122, glycine 123, arginine 173, and arginine 180. Residue aspartate 249 is the Proton acceptor of the active site. Asparagine 250 and aspartate 259 together coordinate Mg(2+). Residue aspartate 259 participates in ATP binding.

It belongs to the SELO family. Mg(2+) serves as cofactor. Mn(2+) is required as a cofactor.

It catalyses the reaction L-seryl-[protein] + ATP = 3-O-(5'-adenylyl)-L-seryl-[protein] + diphosphate. The catalysed reaction is L-threonyl-[protein] + ATP = 3-O-(5'-adenylyl)-L-threonyl-[protein] + diphosphate. It carries out the reaction L-tyrosyl-[protein] + ATP = O-(5'-adenylyl)-L-tyrosyl-[protein] + diphosphate. The enzyme catalyses L-histidyl-[protein] + UTP = N(tele)-(5'-uridylyl)-L-histidyl-[protein] + diphosphate. It catalyses the reaction L-seryl-[protein] + UTP = O-(5'-uridylyl)-L-seryl-[protein] + diphosphate. The catalysed reaction is L-tyrosyl-[protein] + UTP = O-(5'-uridylyl)-L-tyrosyl-[protein] + diphosphate. In terms of biological role, nucleotidyltransferase involved in the post-translational modification of proteins. It can catalyze the addition of adenosine monophosphate (AMP) or uridine monophosphate (UMP) to a protein, resulting in modifications known as AMPylation and UMPylation. The sequence is that of Protein nucleotidyltransferase YdiU from Pectobacterium atrosepticum (strain SCRI 1043 / ATCC BAA-672) (Erwinia carotovora subsp. atroseptica).